Reading from the N-terminus, the 352-residue chain is Deoxyhypusine synthase-like protein (352 aa).

This sequence belongs to the deoxyhypusine synthase family.

The polypeptide is Deoxyhypusine synthase-like protein (Coxiella burnetii (strain Dugway 5J108-111)).